Consider the following 407-residue polypeptide: Immunoglobulin superfamily member 5 (407 aa).

Topologically, residues 1 to 266 (MGQKERSTAD…LGFSLPTWGK (266 aa)) are extracellular. Ig-like V-type domains follow at residues 39–139 (NEVI…LTVQ) and 142–231 (GELF…ATVN). Residues Asn-59, Asn-103, Asn-210, and Asn-231 are each glycosylated (N-linked (GlcNAc...) asparagine). 2 disulfides stabilise this stretch: Cys-60/Cys-123 and Cys-163/Cys-215. Residues 267–285 (VGLGLAGTMLLTPTCTLTI) traverse the membrane as a helical segment. Over 286–407 (RCCCCRRRCC…PEKVSNTTVV (122 aa)) the chain is Cytoplasmic. The segment covering 320 to 331 (KSEKEKTNKETE) has biased composition (basic and acidic residues). The tract at residues 320 to 407 (KSEKEKTNKE…PEKVSNTTVV (88 aa)) is disordered. Over residues 389–407 (PQASFNLASPEKVSNTTVV) the composition is skewed to polar residues.

Belongs to the immunoglobulin superfamily. As to quaternary structure, interacts with MAGI1 at tight junctions, forms a tripartite complex with NPHS1. Interacts with LNX1 isoform 2 via its PDZ 2 domain, it may also interact with other isoforms containing this domain.

The protein localises to the apical cell membrane. The protein resides in the cell junction. It is found in the tight junction. Provides, together with MAGI1, an adhesion machinery at tight junctions, which may regulate the permeability of kidney glomerulus and small intestinal epithelial cells. Mediates calcium-independent homophilic cell adhesion. In testis, it may function as a cell adhesion molecule rather than a tight-junction protein. It may participate in the adhesion between spermatogonia-spermatogonia, spermatogonia-Sertoli cells, and Sertoli cells-Sertoli cells. In Homo sapiens (Human), this protein is Immunoglobulin superfamily member 5 (IGSF5).